A 76-amino-acid chain; its full sequence is MTDSVVVRVKPGSHKGPLVEVGPNGELIIYVREPAIDGKANDAVTRLLAAHLQLPKSRVKLVSGATSRFKRFRLSR.

This sequence belongs to the UPF0235 family.

The sequence is that of UPF0235 protein MRA_1997 from Mycobacterium tuberculosis (strain ATCC 25177 / H37Ra).